The following is a 513-amino-acid chain: ATP synthase subunit alpha 1 (513 aa).

169–176 (GDRQCGKT) serves as a coordination point for ATP.

Belongs to the ATPase alpha/beta chains family. In terms of assembly, F-type ATPases have 2 components, CF(1) - the catalytic core - and CF(0) - the membrane proton channel. CF(1) has five subunits: alpha(3), beta(3), gamma(1), delta(1), epsilon(1). CF(0) has three main subunits: a(1), b(2) and c(9-12). The alpha and beta chains form an alternating ring which encloses part of the gamma chain. CF(1) is attached to CF(0) by a central stalk formed by the gamma and epsilon chains, while a peripheral stalk is formed by the delta and b chains.

The protein resides in the cell inner membrane. It carries out the reaction ATP + H2O + 4 H(+)(in) = ADP + phosphate + 5 H(+)(out). Its function is as follows. Produces ATP from ADP in the presence of a proton gradient across the membrane. The alpha chain is a regulatory subunit. The sequence is that of ATP synthase subunit alpha 1 from Burkholderia pseudomallei (strain 1710b).